Consider the following 526-residue polypeptide: Peptide chain release factor 3 (526 aa).

The tr-type G domain maps to 9-277 (DKRRTFAIIS…GIVEWAPKPL (269 aa)). Residues 18–25 (SHPDAGKT), 86–90 (DTPGH), and 140–143 (NKLD) contribute to the GTP site.

It belongs to the TRAFAC class translation factor GTPase superfamily. Classic translation factor GTPase family. PrfC subfamily.

The protein resides in the cytoplasm. Increases the formation of ribosomal termination complexes and stimulates activities of RF-1 and RF-2. It binds guanine nucleotides and has strong preference for UGA stop codons. It may interact directly with the ribosome. The stimulation of RF-1 and RF-2 is significantly reduced by GTP and GDP, but not by GMP. The sequence is that of Peptide chain release factor 3 from Shewanella putrefaciens (strain CN-32 / ATCC BAA-453).